The chain runs to 309 residues: MNAVWIDEAPVAGAATNSLKIERETHKLEKRLCREVGRAIVDYNMIEEGDKVMVCVSGGKDSYAMLDILLKLRARAPIHFDIVAVNLDQKQPGFPEEVLPRYLSELGVDFHIENQDTYSIVKRVIPEGKTTCGLCSRLRRGILYRVADELGATKVALGHHRDDMLQTFFLNMFFAGKLKSMPPKLVSDDGKHIVIRPLAYVAEKDLVRWAQHREFPIIPCTLCGSQENLQRKQVGEMLREWDRKHLGRVENMFTALQNVVPSHLLDGTQHDFKGLKATGVADEDGDKAFDTPSFDLLSQAPAALRILQG.

The PP-loop motif motif lies at 57-62 (SGGKDS). 3 residues coordinate [4Fe-4S] cluster: Cys132, Cys135, and Cys223.

This sequence belongs to the TtcA family. Homodimer. The cofactor is Mg(2+). [4Fe-4S] cluster serves as cofactor.

The protein localises to the cytoplasm. The enzyme catalyses cytidine(32) in tRNA + S-sulfanyl-L-cysteinyl-[cysteine desulfurase] + AH2 + ATP = 2-thiocytidine(32) in tRNA + L-cysteinyl-[cysteine desulfurase] + A + AMP + diphosphate + H(+). It functions in the pathway tRNA modification. In terms of biological role, catalyzes the ATP-dependent 2-thiolation of cytidine in position 32 of tRNA, to form 2-thiocytidine (s(2)C32). The sulfur atoms are provided by the cysteine/cysteine desulfurase (IscS) system. The sequence is that of tRNA-cytidine(32) 2-sulfurtransferase from Variovorax paradoxus (strain S110).